The following is a 178-amino-acid chain: Large ribosomal subunit protein uL10 (178 aa).

Belongs to the universal ribosomal protein uL10 family. As to quaternary structure, part of the ribosomal stalk of the 50S ribosomal subunit. The N-terminus interacts with L11 and the large rRNA to form the base of the stalk. The C-terminus forms an elongated spine to which L12 dimers bind in a sequential fashion forming a multimeric L10(L12)X complex.

Its function is as follows. Forms part of the ribosomal stalk, playing a central role in the interaction of the ribosome with GTP-bound translation factors. In Stenotrophomonas maltophilia (strain R551-3), this protein is Large ribosomal subunit protein uL10.